The chain runs to 367 residues: Dimethyladenosine transferase 1, mitochondrial (367 aa).

Residues 1-16 (MASASRLPPLPALRDF) constitute a mitochondrion transit peptide. S-adenosyl-L-methionine-binding positions include 30-33 (QNYL), Asn31, Leu33, Gly58, Glu80, Asp106, and Asn141.

Belongs to the class I-like SAM-binding methyltransferase superfamily. rRNA adenine N(6)-methyltransferase family. KsgA subfamily.

It is found in the mitochondrion. In terms of biological role, probable S-adenosyl-L-methionine-dependent methyltransferase which specifically dimethylates mitochondrial 12S rRNA at the conserved stem loop. Also required for basal transcription of mitochondrial DNA. Stimulates transcription independently of the methyltransferase activity. The protein is Dimethyladenosine transferase 1, mitochondrial (tfbm-1) of Caenorhabditis elegans.